Here is a 435-residue protein sequence, read N- to C-terminus: Homogentisate 1,2-dioxygenase (435 aa).

The active-site Proton acceptor is histidine 289. Fe cation is bound by residues histidine 332 and glutamate 338. 2 residues coordinate homogentisate: tyrosine 347 and histidine 368. Residue histidine 368 coordinates Fe cation.

It belongs to the homogentisate dioxygenase family. Hexamer; dimer of trimers. It depends on Fe cation as a cofactor.

The enzyme catalyses homogentisate + O2 = 4-maleylacetoacetate + H(+). It functions in the pathway amino-acid degradation; L-phenylalanine degradation; acetoacetate and fumarate from L-phenylalanine: step 4/6. In terms of biological role, involved in the catabolism of homogentisate (2,5-dihydroxyphenylacetate or 2,5-OH-PhAc), a central intermediate in the degradation of phenylalanine and tyrosine. Catalyzes the oxidative ring cleavage of the aromatic ring of homogentisate to yield maleylacetoacetate. This Pseudomonas savastanoi pv. phaseolicola (strain 1448A / Race 6) (Pseudomonas syringae pv. phaseolicola (strain 1448A / Race 6)) protein is Homogentisate 1,2-dioxygenase.